A 392-amino-acid polypeptide reads, in one-letter code: Odorant receptor 85f (392 aa).

Residues 1-36 (MEPVQYSYEDFARLPTTVFWIMGYDMLGVPKTRSRR) are Cytoplasmic-facing. The helical transmembrane segment at 37 to 57 (ILYWIYRFLCLASHGVCVGVM) threads the bilayer. Over 58–69 (VFRMVEAKTIDN) the chain is Extracellular. The N-linked (GlcNAc...) asparagine glycan is linked to asparagine 69. Residues 70–90 (VSLIMRYATLVTYIINSDTKF) traverse the membrane as a helical segment. The Cytoplasmic portion of the chain corresponds to 91-130 (ATVLQRSAIQSLNSKLAELYPKTTLDRIYHRVNDHYWTKS). A helical transmembrane segment spans residues 131–151 (FVYLVIIYIGSSIMVVIGPII). At 152–179 (TSIIAYFTHNVFTYMHCYPYFLYDPEKD) the chain is on the extracellular side. The helical transmembrane segment at 180-200 (PVWIYISIYALEWLHSTQMVI) threads the bilayer. Residues 201–268 (SNIGADIWLL…NDLNGIFGKS (68 aa)) are Cytoplasmic-facing. The helical transmembrane segment at 269 to 289 (LLLSLLTTAAVICTVAVYTLI) threads the bilayer. At 290–295 (QGPTLE) the chain is on the extracellular side. A helical membrane pass occupies residues 296 to 316 (GFTYVIFIGTSVMQVYLVCYY). Residues 317–363 (GQQVLDLSGEVAHAVYNHDFHDASIAYKRYLLIIIIRAQQPVELNAM) lie on the Cytoplasmic side of the membrane. A helical transmembrane segment spans residues 364-384 (GYLSISLDTFKQLMSVSYRVI). The Extracellular segment spans residues 385–392 (TMLMQMIQ).

Belongs to the insect chemoreceptor superfamily. Heteromeric odorant receptor channel (TC 1.A.69) family. Or49a subfamily. Interacts with Orco. Complexes exist early in the endomembrane system in olfactory sensory neurons (OSNs), coupling these complexes to the conserved ciliary trafficking pathway. In terms of tissue distribution, expressed in olfactory sensory neurons in the antenna.

The protein localises to the cell membrane. Functionally, odorant receptor which mediates acceptance or avoidance behavior, depending on its substrates. The odorant receptor repertoire encodes a large collection of odor stimuli that vary widely in identity, intensity, and duration. May form a complex with Orco to form odorant-sensing units, providing sensitive and prolonged odorant signaling and calcium permeability. The chain is Odorant receptor 85f (Or85f) from Drosophila melanogaster (Fruit fly).